A 58-amino-acid chain; its full sequence is Small ribosomal subunit protein bS21 (58 aa).

A disordered region spans residues 36-58 (EHYEKPSVKRKKKSEAARKRKFK). A compositionally biased stretch (basic residues) spans 43-58 (VKRKKKSEAARKRKFK).

This sequence belongs to the bacterial ribosomal protein bS21 family.

This chain is Small ribosomal subunit protein bS21, found in Clostridium kluyveri (strain NBRC 12016).